A 253-amino-acid polypeptide reads, in one-letter code: Hydroxyacylglutathione hydrolase (253 aa).

Histidine 59, histidine 61, aspartate 63, histidine 64, histidine 118, aspartate 143, and histidine 181 together coordinate Zn(2+).

This sequence belongs to the metallo-beta-lactamase superfamily. Glyoxalase II family. In terms of assembly, monomer. It depends on Zn(2+) as a cofactor.

The catalysed reaction is an S-(2-hydroxyacyl)glutathione + H2O = a 2-hydroxy carboxylate + glutathione + H(+). It functions in the pathway secondary metabolite metabolism; methylglyoxal degradation; (R)-lactate from methylglyoxal: step 2/2. In terms of biological role, thiolesterase that catalyzes the hydrolysis of S-D-lactoyl-glutathione to form glutathione and D-lactic acid. In Prochlorococcus marinus (strain MIT 9211), this protein is Hydroxyacylglutathione hydrolase.